Here is a 319-residue protein sequence, read N- to C-terminus: Thioredoxin reductase (319 aa).

36 to 48 provides a ligand contact to FAD; it reads EGFMAGGVAAGGQ. Cys-144 and Cys-147 are joined by a disulfide. 289–298 contributes to the FAD binding site; sequence DVQDKVYRQA.

The protein belongs to the class-II pyridine nucleotide-disulfide oxidoreductase family. In terms of assembly, homodimer. It depends on FAD as a cofactor.

The catalysed reaction is [thioredoxin]-dithiol + NADP(+) = [thioredoxin]-disulfide + NADPH + H(+). The protein is Thioredoxin reductase (trrA) of Dictyostelium discoideum (Social amoeba).